The primary structure comprises 363 residues: Protein RecA (363 aa).

An ATP-binding site is contributed by 77-84; it reads GPESSGKT.

This sequence belongs to the RecA family.

The protein resides in the cytoplasm. Its function is as follows. Can catalyze the hydrolysis of ATP in the presence of single-stranded DNA, the ATP-dependent uptake of single-stranded DNA by duplex DNA, and the ATP-dependent hybridization of homologous single-stranded DNAs. It interacts with LexA causing its activation and leading to its autocatalytic cleavage. This is Protein RecA from Agrobacterium fabrum (strain C58 / ATCC 33970) (Agrobacterium tumefaciens (strain C58)).